Reading from the N-terminus, the 112-residue chain is Large ribosomal subunit protein uL22 (112 aa).

The protein belongs to the universal ribosomal protein uL22 family. As to quaternary structure, part of the 50S ribosomal subunit.

This protein binds specifically to 23S rRNA; its binding is stimulated by other ribosomal proteins, e.g. L4, L17, and L20. It is important during the early stages of 50S assembly. It makes multiple contacts with different domains of the 23S rRNA in the assembled 50S subunit and ribosome. Functionally, the globular domain of the protein is located near the polypeptide exit tunnel on the outside of the subunit, while an extended beta-hairpin is found that lines the wall of the exit tunnel in the center of the 70S ribosome. This Anaplasma marginale (strain Florida) protein is Large ribosomal subunit protein uL22.